We begin with the raw amino-acid sequence, 368 residues long: Aminomethyltransferase (368 aa).

The protein belongs to the GcvT family. The glycine cleavage system is composed of four proteins: P, T, L and H.

It catalyses the reaction N(6)-[(R)-S(8)-aminomethyldihydrolipoyl]-L-lysyl-[protein] + (6S)-5,6,7,8-tetrahydrofolate = N(6)-[(R)-dihydrolipoyl]-L-lysyl-[protein] + (6R)-5,10-methylene-5,6,7,8-tetrahydrofolate + NH4(+). The glycine cleavage system catalyzes the degradation of glycine. The protein is Aminomethyltransferase of Thermoanaerobacter sp. (strain X514).